We begin with the raw amino-acid sequence, 606 residues long: (R)-limonene synthase 1, chloroplastic (606 aa).

The N-terminal 32 residues, 1 to 32 (MSSCINPSTLVTSVNAFKCLPLATNKAAIRIM), are a transit peptide targeting the chloroplast. 2 residues coordinate Mn(2+): Asp-342 and Asp-346. Substrate contacts are provided by Asp-342, Asp-346, Arg-484, Asp-487, and Lys-503. Residues 342–346 (DDIYD) carry the DDXXD motif motif. Position 487 (Asp-487) interacts with Mn(2+).

It belongs to the terpene synthase family. The cofactor is Mg(2+). Requires Mn(2+) as cofactor.

It localises to the plastid. The protein resides in the chloroplast. The enzyme catalyses (2E)-geranyl diphosphate = (4R)-limonene + diphosphate. The polypeptide is (R)-limonene synthase 1, chloroplastic (Citrus limon (Lemon)).